Reading from the N-terminus, the 61-residue chain is Small ribosomal subunit protein uS14 (61 aa).

Zn(2+)-binding residues include Cys24, Cys27, Cys40, and Cys43.

Belongs to the universal ribosomal protein uS14 family. Zinc-binding uS14 subfamily. As to quaternary structure, part of the 30S ribosomal subunit. Contacts proteins S3 and S10. Zn(2+) serves as cofactor.

Its function is as follows. Binds 16S rRNA, required for the assembly of 30S particles and may also be responsible for determining the conformation of the 16S rRNA at the A site. The chain is Small ribosomal subunit protein uS14 from Deinococcus geothermalis (strain DSM 11300 / CIP 105573 / AG-3a).